A 657-amino-acid chain; its full sequence is Glycogen debranching enzyme (657 aa).

The active-site Nucleophile is aspartate 336. The Proton donor role is filled by glutamate 371. A compositionally biased stretch (basic and acidic residues) spans 458–467; the sequence is NEANGEENRD. The tract at residues 458-479 is disordered; that stretch reads NEANGEENRDGTNNNYSNNHGK.

The protein belongs to the glycosyl hydrolase 13 family.

It carries out the reaction Hydrolysis of (1-&gt;6)-alpha-D-glucosidic linkages to branches with degrees of polymerization of three or four glucose residues in limit dextrin.. It functions in the pathway glycan degradation; glycogen degradation. Its function is as follows. Removes maltotriose and maltotetraose chains that are attached by 1,6-alpha-linkage to the limit dextrin main chain, generating a debranched limit dextrin. The polypeptide is Glycogen debranching enzyme (Escherichia coli (strain K12 / DH10B)).